Reading from the N-terminus, the 227-residue chain is MKFTALAKATLALGILTTGTLTTEVHSGHAKQNQKSVNKHDKEALYRYYTGKTMEMKNISALKHGKNNLRFKFRGIKIQVLLPGNDKSKFQQRSYEGLDVFFVQEKRDKHDIFYTVGGVIQNNKTSGVVSAPILNISKEKGEDAFVKGYPYYIKKEKITLKELDYKLRKHLIEKYGLYKTISKDGRVKISLKDGSFYNLDLRSKLKFKYMGEVIESKQIKDIEVNLK.

A signal peptide spans 1–30 (MKFTALAKATLALGILTTGTLTTEVHSGHA).

This sequence belongs to the staphylococcal/streptococcal toxin family. In terms of assembly, interacts with prothrombin/F2 and coagulation factor X/F12. Interacts with human CXCR4.

The protein localises to the secreted. Plays a role in the inhibition of host complement activation via the classical pathway by interacting with the Fc region of human IgG and thereby interfering with the IgG/C1q interaction. Also inhibits the penultimate step of plasma clotting by interacting with prothrombin/F2 and coagulation factor X/F12. Does not affect the protease activity of thrombin but interferes with the conversion of prothrombin to thrombin. Interacts with human receptor CXCR4 and specifically inhibits CXCL12-induced calcium mobilization and cell migration. The chain is Staphylococcal superantigen-like 10 from Staphylococcus aureus (strain NCTC 8325 / PS 47).